We begin with the raw amino-acid sequence, 935 residues long: Isoleucine--tRNA ligase (935 aa).

The short motif at 58–68 is the 'HIGH' region element; sequence PYANGNLHLGH. Residue Glu559 coordinates L-isoleucyl-5'-AMP. The 'KMSKS' region motif lies at 600-604; that stretch reads KMSKS. Position 603 (Lys603) interacts with ATP. Cys898, Cys901, Cys918, and Cys921 together coordinate Zn(2+).

The protein belongs to the class-I aminoacyl-tRNA synthetase family. IleS type 1 subfamily. As to quaternary structure, monomer. Zn(2+) serves as cofactor.

The protein resides in the cytoplasm. The catalysed reaction is tRNA(Ile) + L-isoleucine + ATP = L-isoleucyl-tRNA(Ile) + AMP + diphosphate. Its function is as follows. Catalyzes the attachment of isoleucine to tRNA(Ile). As IleRS can inadvertently accommodate and process structurally similar amino acids such as valine, to avoid such errors it has two additional distinct tRNA(Ile)-dependent editing activities. One activity is designated as 'pretransfer' editing and involves the hydrolysis of activated Val-AMP. The other activity is designated 'posttransfer' editing and involves deacylation of mischarged Val-tRNA(Ile). This is Isoleucine--tRNA ligase from Haemophilus ducreyi (strain 35000HP / ATCC 700724).